A 37-amino-acid polypeptide reads, in one-letter code: Esculentin-2HSa (37 aa).

Residues Cys-31 and Cys-37 are joined by a disulfide bond.

In terms of tissue distribution, expressed by the skin glands.

The protein resides in the secreted. Has antibacterial activity against the Gram-positive bacterium S.aureus ATCC 25923 (MIC=32 uM) and the Gram-negative bacterium E.coli ATCC 25726 (MIC=16 uM). The protein is Esculentin-2HSa of Odorrana hosii (Hose's rock frog).